The following is a 154-amino-acid chain: Myoglobin (154 aa).

The 147-residue stretch at 2 to 148 (GLSDGEWQLV…FRKDMASNYK (147 aa)) folds into the Globin domain. At serine 4 the chain carries Phosphoserine. Histidine 65 serves as a coordination point for nitrite. Histidine 65 contributes to the O2 binding site. Threonine 68 bears the Phosphothreonine mark. Histidine 94 serves as a coordination point for heme b.

The protein belongs to the globin family. Monomeric.

It is found in the cytoplasm. It localises to the sarcoplasm. The catalysed reaction is Fe(III)-heme b-[protein] + nitric oxide + H2O = Fe(II)-heme b-[protein] + nitrite + 2 H(+). The enzyme catalyses H2O2 + AH2 = A + 2 H2O. In terms of biological role, monomeric heme protein which primary function is to store oxygen and facilitate its diffusion within muscle tissues. Reversibly binds oxygen through a pentacoordinated heme iron and enables its timely and efficient release as needed during periods of heightened demand. Depending on the oxidative conditions of tissues and cells, and in addition to its ability to bind oxygen, it also has a nitrite reductase activity whereby it regulates the production of bioactive nitric oxide. Under stress conditions, like hypoxia and anoxia, it also protects cells against reactive oxygen species thanks to its pseudoperoxidase activity. The protein is Myoglobin (MB) of Hylobates agilis (Agile gibbon).